The following is a 316-amino-acid chain: MTVIDNHEALAKDGELSEASARDYFELLKPRVMSLVVFTAFAGLVLAPGQINPVLGLIAILCIAVGAGASGALNMWYDADIDAIMSRTAKRPIPAGRIAPSEALAFGLVLSCFSVAILGLAVNWLSAGILAFTIFFYAVIYTMWLKRSTPQNIVIGGAAGAFPPMIGWACVTNSVTIESTVLFLIIFLWTPAHFWALALFKMRDYEAVGVPMLPNVSGERVTKHQIVAYAVLTAICAVLPSYLGFASFAYGLVAAALGAIFIYCSIAVWRMPDGDLKMIPAKKLFAFSIFYLFAIFSALMIDRLAAMLVSYAGGSL.

9 helical membrane-spanning segments follow: residues 32-52 (VMSLVVFTAFAGLVLAPGQIN), 53-73 (PVLGLIAILCIAVGAGASGAL), 93-113 (IPAGRIAPSEALAFGLVLSCF), 116-136 (AILGLAVNWLSAGILAFTIFF), 152-172 (NIVIGGAAGAFPPMIGWACVT), 180-200 (TVLFLIIFLWTPAHFWALALF), 226-246 (IVAYAVLTAICAVLPSYLGFA), 248-268 (FAYGLVAAALGAIFIYCSIAV), and 289-309 (IFYLFAIFSALMIDRLAAMLV).

This sequence belongs to the UbiA prenyltransferase family. Protoheme IX farnesyltransferase subfamily.

It is found in the cell inner membrane. The enzyme catalyses heme b + (2E,6E)-farnesyl diphosphate + H2O = Fe(II)-heme o + diphosphate. Its pathway is porphyrin-containing compound metabolism; heme O biosynthesis; heme O from protoheme: step 1/1. Functionally, converts heme B (protoheme IX) to heme O by substitution of the vinyl group on carbon 2 of heme B porphyrin ring with a hydroxyethyl farnesyl side group. The sequence is that of Protoheme IX farnesyltransferase from Rhizobium etli (strain CIAT 652).